The primary structure comprises 649 residues: Threonine--tRNA ligase (649 aa).

A TGS domain is found at 1-60 (MHVTLPDGKQLDLQPGATALDAAKAIGPRLAQDALGATANGELTDLMTPLSDGASITLIT). The tract at residues 248–544 (DHRKLGKELE…LIEHYAGDFP (297 aa)) is catalytic. Zn(2+) is bound by residues Cys341, His392, and His521.

Belongs to the class-II aminoacyl-tRNA synthetase family. In terms of assembly, homodimer. The cofactor is Zn(2+).

It localises to the cytoplasm. It catalyses the reaction tRNA(Thr) + L-threonine + ATP = L-threonyl-tRNA(Thr) + AMP + diphosphate + H(+). Functionally, catalyzes the attachment of threonine to tRNA(Thr) in a two-step reaction: L-threonine is first activated by ATP to form Thr-AMP and then transferred to the acceptor end of tRNA(Thr). Also edits incorrectly charged L-seryl-tRNA(Thr). The chain is Threonine--tRNA ligase from Deinococcus radiodurans (strain ATCC 13939 / DSM 20539 / JCM 16871 / CCUG 27074 / LMG 4051 / NBRC 15346 / NCIMB 9279 / VKM B-1422 / R1).